Reading from the N-terminus, the 78-residue chain is Conotoxin ArMKLT2-0312 (78 aa).

The N-terminal stretch at 1 to 22 (MKLTCVLIIAVLFLTACQLITA) is a signal peptide. Positions 23-45 (DYSRDKQEYRAVRLRDAMRYSRV) are excised as a propeptide. Glutamine 48 is modified (pyrrolidone carboxylic acid). 3 disulfide bridges follow: cysteine 49–cysteine 62, cysteine 56–cysteine 67, and cysteine 61–cysteine 75.

This sequence belongs to the conotoxin O1 superfamily. As to expression, expressed by the venom duct.

The protein localises to the secreted. This is Conotoxin ArMKLT2-0312 from Conus arenatus (Sand-dusted cone).